The chain runs to 180 residues: MVVEVLRLGHRWGRDKRISTHVALTSRALGADKILFVSNDDHVKDSVNRIVEQWGGDFKFDVVDSWKQYIWSFKKNNGIVIHLTMYGENINEIMKKIIEKRQEGKDSKNILIIIGAEKVPKEAYELADYNVSVGNQPHSEVAAIAILLDRLFEGSSLYKEYPDAKIKVNPSDRYKSVEIR.

Residues Leu-83, 115 to 119 (GAEKV), and 133 to 140 (VGNQPHSE) contribute to the S-adenosyl-L-methionine site.

Belongs to the aTrm56 family. Homodimer.

It localises to the cytoplasm. The catalysed reaction is cytidine(56) in tRNA + S-adenosyl-L-methionine = 2'-O-methylcytidine(56) in tRNA + S-adenosyl-L-homocysteine + H(+). In terms of biological role, specifically catalyzes the AdoMet-dependent 2'-O-ribose methylation of cytidine at position 56 in tRNAs. This Methanococcus aeolicus (strain ATCC BAA-1280 / DSM 17508 / OCM 812 / Nankai-3) protein is tRNA (cytidine(56)-2'-O)-methyltransferase.